Here is a 115-residue protein sequence, read N- to C-terminus: MKISLHNKRQRGDQNQNMSVFNVLKPLLKGSNSFKVKLNGFLFNNVSTITIRTLMKTHKGTAKRWRRTGNTFKRGIAGRKHGNIGWSHRSLKALTGRKIAHPAYSKHLKRLLPYH.

It belongs to the bacterial ribosomal protein bL35 family.

It localises to the mitochondrion. The sequence is that of Large ribosomal subunit protein bL35m from Saccharomyces cerevisiae (strain YJM789) (Baker's yeast).